The chain runs to 331 residues: MGSVSKANVPKIDVSPLFGDDQAAKMRVAQQIDAASRDTGFFYAVNHGINVQRLSQKTKEFHMSITPEEKWDLAIRAYNKEHQDQVRAGYYLSIPGKKAVESFCYLNPNFTPDHPRIQAKTPTHEVNVWPDETKHPGFQDFAEQYYWDVFGLSSALLKGYALALGKEENFFARHFKPDDTLASVVLIRYPYLDPYPEAAIKTAADGTKLSFEWHEDVSLITVLYQSNVQNLQVETAAGYQDIEADDTGYLINCGSYMAHLTNNYYKAPIHRVKWVNAERQSLPFFVNLGYDSVIDPFDPREPNGKSDREPLSYGDYLQNGLVSLINKNGQT.

Isopenicillin N is bound by residues Arg87, Tyr91, Ser183, and Tyr189. N-[(5S)-5-amino-5-carboxypentanoyl]-L-cysteinyl-D-valine is bound by residues Arg87, Tyr91, Ser183, Tyr189, His214, and Asp216. One can recognise a Fe2OG dioxygenase domain in the interval 176 to 288 (KPDDTLASVV…RQSLPFFVNL (113 aa)). Fe(2+) contacts are provided by His214, Asp216, and His270. Arg279 serves as a coordination point for 2-oxoglutarate. Ser281 contacts isopenicillin N. Ser281 serves as a coordination point for N-[(5S)-5-amino-5-carboxypentanoyl]-L-cysteinyl-D-valine.

Belongs to the iron/ascorbate-dependent oxidoreductase family. As to quaternary structure, monomer. Fe(2+) is required as a cofactor.

Its subcellular location is the cytoplasm. It localises to the cytosol. The enzyme catalyses N-[(5S)-5-amino-5-carboxypentanoyl]-L-cysteinyl-D-valine + O2 = isopenicillin N + 2 H2O. It functions in the pathway antibiotic biosynthesis; penicillin G biosynthesis; penicillin G from L-alpha-aminoadipate and L-cysteine and L-valine: step 2/3. Isopenicillin N synthase; part of the gene cluster that mediates the biosynthesis of penicillin, the world's most important antibiotic. IpnA catalyzes the cyclization of the tripeptide N-[(5S)-5-amino-5-carboxypentanoyl]-L-cysteinyl-D-valine (LLD-ACV or ACV) to form isopenicillin N (IPN) that contains the beta-lactam nucleus. The penicillin biosynthesis occurs via 3 enzymatic steps, the first corresponding to the production of the tripeptide N-[(5S)-5-amino-5-carboxypentanoyl]-L-cysteinyl-D-valine (LLD-ACV or ACV) by the NRPS acvA. The tripeptide ACV is then cyclized to isopenicillin N (IPN) by the isopenicillin N synthase ipnA that forms the beta-lactam nucleus. Finally, the alpha-aminoadipyl side chain is exchanged for phenylacetic acid by the isopenicillin N acyltransferase penDE to yield penicillin in the peroxisomal matrix. The protein is Isopenicillin N synthase of Emericella nidulans (strain FGSC A4 / ATCC 38163 / CBS 112.46 / NRRL 194 / M139) (Aspergillus nidulans).